A 302-amino-acid chain; its full sequence is Phospho-N-acetylmuramoyl-pentapeptide-transferase (302 aa).

The next 9 membrane-spanning stretches (helical) occupy residues 1 to 21 (MIAA…KLFR), 42 to 62 (GTPT…GMIS), 68 to 88 (VLLG…LSVV), 123 to 143 (FFGF…LVIV), 154 to 174 (GLDG…WFFL), 178 to 198 (GVSE…LVFN), 204 to 224 (IFMG…VSVL), 229 to 249 (FYLV…ILQV), and 279 to 299 (IVAV…EIFG).

This sequence belongs to the glycosyltransferase 4 family. MraY subfamily. Mg(2+) is required as a cofactor.

The protein localises to the cell inner membrane. The enzyme catalyses UDP-N-acetyl-alpha-D-muramoyl-L-alanyl-gamma-D-glutamyl-meso-2,6-diaminopimeloyl-D-alanyl-D-alanine + di-trans,octa-cis-undecaprenyl phosphate = di-trans,octa-cis-undecaprenyl diphospho-N-acetyl-alpha-D-muramoyl-L-alanyl-D-glutamyl-meso-2,6-diaminopimeloyl-D-alanyl-D-alanine + UMP. It functions in the pathway cell wall biogenesis; peptidoglycan biosynthesis. In terms of biological role, catalyzes the initial step of the lipid cycle reactions in the biosynthesis of the cell wall peptidoglycan: transfers peptidoglycan precursor phospho-MurNAc-pentapeptide from UDP-MurNAc-pentapeptide onto the lipid carrier undecaprenyl phosphate, yielding undecaprenyl-pyrophosphoryl-MurNAc-pentapeptide, known as lipid I. The protein is Phospho-N-acetylmuramoyl-pentapeptide-transferase of Thermotoga petrophila (strain ATCC BAA-488 / DSM 13995 / JCM 10881 / RKU-1).